A 469-amino-acid chain; its full sequence is Adenosylhomocysteinase (469 aa).

3 residues coordinate substrate: threonine 60, aspartate 135, and glutamate 195. 196–198 (TTT) serves as a coordination point for NAD(+). Substrate is bound by residues lysine 225 and aspartate 229. NAD(+) contacts are provided by residues asparagine 230, 259-264 (GYGDVG), glutamate 282, asparagine 317, 338-340 (IGH), and asparagine 383.

Belongs to the adenosylhomocysteinase family. NAD(+) serves as cofactor.

It localises to the cytoplasm. It catalyses the reaction S-adenosyl-L-homocysteine + H2O = L-homocysteine + adenosine. The protein operates within amino-acid biosynthesis; L-homocysteine biosynthesis; L-homocysteine from S-adenosyl-L-homocysteine: step 1/1. Its function is as follows. May play a key role in the regulation of the intracellular concentration of adenosylhomocysteine. This Hyphomonas neptunium (strain ATCC 15444) protein is Adenosylhomocysteinase.